The sequence spans 709 residues: PP2C-like domain-containing protein CG9801 (709 aa).

Disordered stretches follow at residues 121–222 (DCYG…NSER), 503–530 (LHPSTPPTRPARQSKAESPPNNAPSRPK), and 678–709 (GGGEEHNNGNENGDGGAISPVLQSKEFKETNF). Over residues 130–143 (PPVQVATQNSTRLT) the composition is skewed to polar residues. Residues 182 to 196 (ANLAAASAGTDAGKA) are compositionally biased toward low complexity. Positions 197 to 217 (NSDQNNRNVLNAKTEVSTDGD) are enriched in polar residues. Positions 259-503 (SVSLYETNML…KSASAIYARL (245 aa)) constitute a PPM-type phosphatase domain.

The protein is PP2C-like domain-containing protein CG9801 of Drosophila melanogaster (Fruit fly).